A 247-amino-acid polypeptide reads, in one-letter code: 14-3-3 protein gamma (247 aa).

Residue M1 is modified to N-acetylmethionine. An N-acetylvaline; in 14-3-3 protein gamma, N-terminally processed modification is found at V2. The segment at 2-247 is interaction with SPATA18/MIEAP; it reads VDREQLVQKA…QDDDGGEGNN (246 aa). S71 bears the Phosphoserine mark. Y133 is subject to Phosphotyrosine. T145 carries the post-translational modification Phosphothreonine. The residue at position 215 (S215) is a Phosphoserine. T234 carries the phosphothreonine modification. S235 carries the phosphoserine modification.

Belongs to the 14-3-3 family. Homodimer. Part of a complex that contains DSG3, PKP1, YAP1 and YWHAG; the complex is required for localization of DSG3 and YAP1 to the cell membrane in keratinocytes. Interacts with SAMSN1. Interacts with RAF1, SSH1 and CRTC2/TORC2. Interacts with ABL1 (phosphorylated form); the interaction retains it in the cytoplasm. Interacts with GAB2. Interacts with MDM4 (phosphorylated); negatively regulates MDM4 activity toward TP53. Interacts with PKA-phosphorylated AANAT and SIRT2. Interacts with the 'Thr-369' phosphorylated form of DAPK2. Interacts with PI4KB, TBC1D22A and TBC1D22B. Interacts with SLITRK1. Interacts with LRRK2; this interaction is dependent on LRRK2 phosphorylation. Interacts with MARK2 and MARK3. Interacts with MEFV. Interacts with ENDOG, TSC2 and PIK3C3; interaction with ENDOG weakens its interaction with TSC2 and PIK3C3. Interacts with (phosphorylated) WDR24. Interacts with BEST1; this interaction promotes L-glutamate channel activity leading to the positive regulation of NMDA glutamate receptor activity through the L-glutamate secretion. Interacts with PKP1 (when phosphorylated); the interaction results in translocation of PKP1 to the cytoplasm and loss of intercellular adhesion in keratinocytes. Interacts with SPATA18/MIEAP; a protein that also plays a role in MALM. Phosphorylated by various PKC isozymes.

Its subcellular location is the cytoplasm. It localises to the cytosol. The protein resides in the mitochondrion matrix. Functionally, adapter protein implicated in the regulation of a large spectrum of both general and specialized signaling pathways. Binds to a large number of partners, usually by recognition of a phosphoserine or phosphothreonine motif. Binding generally results in the modulation of the activity of the binding partner. Promotes inactivation of WDR24 component of the GATOR2 complex by binding to phosphorylated WDR24. Participates in the positive regulation of NMDA glutamate receptor activity by promoting the L-glutamate secretion through interaction with BEST1. Reduces keratinocyte intercellular adhesion, via interacting with PKP1 and sequestering it in the cytoplasm, thereby reducing its incorporation into desmosomes. Plays a role in mitochondrial protein catabolic process (also named MALM) that promotes the degradation of damaged proteins inside mitochondria. This is 14-3-3 protein gamma from Bos taurus (Bovine).